Reading from the N-terminus, the 132-residue chain is Phosphoribosyl-AMP cyclohydrolase (132 aa).

D79 serves as a coordination point for Mg(2+). Residue C80 coordinates Zn(2+). D81 and D83 together coordinate Mg(2+). Residues C100 and C107 each coordinate Zn(2+).

It belongs to the PRA-CH family. In terms of assembly, homodimer. Requires Mg(2+) as cofactor. It depends on Zn(2+) as a cofactor.

The protein localises to the cytoplasm. The catalysed reaction is 1-(5-phospho-beta-D-ribosyl)-5'-AMP + H2O = 1-(5-phospho-beta-D-ribosyl)-5-[(5-phospho-beta-D-ribosylamino)methylideneamino]imidazole-4-carboxamide. The protein operates within amino-acid biosynthesis; L-histidine biosynthesis; L-histidine from 5-phospho-alpha-D-ribose 1-diphosphate: step 3/9. In terms of biological role, catalyzes the hydrolysis of the adenine ring of phosphoribosyl-AMP. This Acidovorax sp. (strain JS42) protein is Phosphoribosyl-AMP cyclohydrolase.